A 505-amino-acid chain; its full sequence is Maturase K (505 aa).

This sequence belongs to the intron maturase 2 family. MatK subfamily.

Its subcellular location is the plastid. The protein localises to the chloroplast. In terms of biological role, usually encoded in the trnK tRNA gene intron. Probably assists in splicing its own and other chloroplast group II introns. The chain is Maturase K from Beta vulgaris (Sugar beet).